The chain runs to 138 residues: Molluscan insulin-related peptide 5 (138 aa).

The signal sequence occupies residues 1–31; it reads MAGVRLVFTKAFMVTVLLTLLLNIGVKPAEG. Position 32 is a pyrrolidone carboxylic acid (Gln32). Cystine bridges form between Cys48–Cys124, Cys60–Cys137, and Cys123–Cys128. Residues 72-84 constitute a propeptide, C-beta peptide like; sequence DAETGWLLPETMV. The propeptide at 87-111 is C-alpha peptide like; the sequence is NAQTDLDDPLRNIKLSSESALTYLT. Position 114 is a pyrrolidone carboxylic acid (Gln114).

The protein belongs to the insulin family. In terms of assembly, heterodimer of a B chain and an A chain linked by two disulfide bonds. Expressed in the cerebral light-green cells which are giant neuroendocrines cells involved in the control of growth.

It localises to the cytoplasmic vesicle. The protein localises to the secretory vesicle. The protein is Molluscan insulin-related peptide 5 of Lymnaea stagnalis (Great pond snail).